A 401-amino-acid polypeptide reads, in one-letter code: Acetate kinase (401 aa).

Asn-10 contributes to the Mg(2+) binding site. Lys-17 contacts ATP. Residue Arg-91 coordinates substrate. Asp-150 serves as the catalytic Proton donor/acceptor. ATP is bound by residues 210 to 214, 285 to 287, and 333 to 337; these read HLGNG, DCR, and GIGEN. Glu-387 is a Mg(2+) binding site.

It belongs to the acetokinase family. As to quaternary structure, homodimer. Mg(2+) is required as a cofactor. Mn(2+) serves as cofactor.

The protein resides in the cytoplasm. The catalysed reaction is acetate + ATP = acetyl phosphate + ADP. It functions in the pathway metabolic intermediate biosynthesis; acetyl-CoA biosynthesis; acetyl-CoA from acetate: step 1/2. Its function is as follows. Catalyzes the formation of acetyl phosphate from acetate and ATP. Can also catalyze the reverse reaction. The chain is Acetate kinase from Pasteurella multocida (strain Pm70).